Reading from the N-terminus, the 502-residue chain is ATP synthase subunit alpha (502 aa).

Residues 115–134 (IDGQGPINTTKTRPVEQKAT) are disordered. 169 to 176 (GDRQTGKT) serves as a coordination point for ATP.

The protein belongs to the ATPase alpha/beta chains family. As to quaternary structure, F-type ATPases have 2 components, CF(1) - the catalytic core - and CF(0) - the membrane proton channel. CF(1) has five subunits: alpha(3), beta(3), gamma(1), delta(1), epsilon(1). CF(0) has three main subunits: a(1), b(2) and c(9-12). The alpha and beta chains form an alternating ring which encloses part of the gamma chain. CF(1) is attached to CF(0) by a central stalk formed by the gamma and epsilon chains, while a peripheral stalk is formed by the delta and b chains.

It is found in the cell membrane. The enzyme catalyses ATP + H2O + 4 H(+)(in) = ADP + phosphate + 5 H(+)(out). Produces ATP from ADP in the presence of a proton gradient across the membrane. The alpha chain is a regulatory subunit. The sequence is that of ATP synthase subunit alpha from Staphylococcus haemolyticus (strain JCSC1435).